A 600-amino-acid chain; its full sequence is Prostaglandin G/H synthase 1 (600 aa).

The first 24 residues, 1–24 (MSRQSISLRFPLLLLLLSPSPVFS), serve as a signal peptide directing secretion. The EGF-like domain maps to 32-70 (PVNPCCYYPCQHQGICVRFGLDRYQCDCTRTGYSGPNCT). 4 disulfides stabilise this stretch: cysteine 36–cysteine 47, cysteine 37–cysteine 159, cysteine 41–cysteine 57, and cysteine 59–cysteine 69. A glycan (N-linked (GlcNAc...) asparagine) is linked at asparagine 68. 4 consecutive transmembrane segments (helical) span residues 74–82 (IWTWLRTTL), 86–92 (PSFIHFL), 97–105 (RWLWDFVNA), and 108–122 (IRDT…VRSN). An N-linked (GlcNAc...) asparagine glycan is attached at asparagine 144. The active-site Proton acceptor is histidine 207. Tyrosine 385 functions as the For cyclooxygenase activity in the catalytic mechanism. Heme b is bound at residue histidine 388. N-linked (GlcNAc...) asparagine glycosylation occurs at asparagine 410. Cysteine 569 and cysteine 575 are disulfide-bonded.

The protein belongs to the prostaglandin G/H synthase family. Homodimer. Requires heme b as cofactor.

It is found in the endoplasmic reticulum membrane. The protein localises to the microsome membrane. The catalysed reaction is (5Z,8Z,11Z,14Z)-eicosatetraenoate + AH2 + 2 O2 = prostaglandin H2 + A + H2O. It carries out the reaction (5Z,8Z,11Z,14Z)-eicosatetraenoate + 2 O2 = prostaglandin G2. It catalyses the reaction prostaglandin G2 + AH2 = prostaglandin H2 + A + H2O. The enzyme catalyses (9Z,12Z)-octadecadienoate + AH2 + O2 = (9R)-hydroxy-(10E,12Z)-octadecadienoate + A + H2O. The catalysed reaction is (9Z,12Z)-octadecadienoate + AH2 + O2 = (9S)-hydroxy-(10E,12Z)-octadecadienoate + A + H2O. It carries out the reaction (9Z,12Z)-octadecadienoate + AH2 + O2 = (13S)-hydroxy-(9Z,11E)-octadecadienoate + A + H2O. It catalyses the reaction (9Z,12Z)-octadecadienoate + AH2 + O2 = (13R)-hydroxy-(9Z,11E)-octadecadienoate + A + H2O. Its pathway is lipid metabolism; prostaglandin biosynthesis. With respect to regulation, the cyclooxygenase activity is inhibited by nonsteroidal anti-inflammatory drugs (NSAIDs) including ibuprofen, flurbiprofen, ketoprofen, naproxen, flurbiprofen, anirolac, fenclofenac and diclofenac. Functionally, dual cyclooxygenase and peroxidase that plays an important role in the biosynthesis pathway of prostanoids, a class of C20 oxylipins mainly derived from arachidonate ((5Z,8Z,11Z,14Z)-eicosatetraenoate, AA, C20:4(n-6)), with a particular role in the inflammatory response. The cyclooxygenase activity oxygenates AA to the hydroperoxy endoperoxide prostaglandin G2 (PGG2), and the peroxidase activity reduces PGG2 to the hydroxy endoperoxide prostaglandin H2 (PGH2), the precursor of all 2-series prostaglandins and thromboxanes. This complex transformation is initiated by abstraction of hydrogen at carbon 13 (with S-stereochemistry), followed by insertion of molecular O2 to form the endoperoxide bridge between carbon 9 and 11 that defines prostaglandins. The insertion of a second molecule of O2 (bis-oxygenase activity) yields a hydroperoxy group in PGG2 that is then reduced to PGH2 by two electrons. Involved in the constitutive production of prostanoids in particular in the stomach and platelets. In gastric epithelial cells, it is a key step in the generation of prostaglandins, such as prostaglandin E2 (PGE2), which plays an important role in cytoprotection. In platelets, it is involved in the generation of thromboxane A2 (TXA2), which promotes platelet activation and aggregation, vasoconstriction and proliferation of vascular smooth muscle cells. Can also use linoleate (LA, (9Z,12Z)-octadecadienoate, C18:2(n-6)) as substrate and produce hydroxyoctadecadienoates (HODEs) in a regio- and stereospecific manner, being (9R)-HODE ((9R)-hydroxy-(10E,12Z)-octadecadienoate) and (13S)-HODE ((13S)-hydroxy-(9Z,11E)-octadecadienoate) its major products. The chain is Prostaglandin G/H synthase 1 (PTGS1) from Ovis aries (Sheep).